A 152-amino-acid chain; its full sequence is Ubiquitin-conjugating enzyme E2 N (152 aa).

The 147-residue stretch at 3-149 (GLPRRIIKET…ARAWTRLYAM (147 aa)) folds into the UBC core domain. N6-acetyllysine is present on Lys-82. The active-site Glycyl thioester intermediate is Cys-87. Lys-92 participates in a covalent cross-link: Glycyl lysine isopeptide (Lys-Gly) (interchain with G-Cter in ISG15).

It belongs to the ubiquitin-conjugating enzyme family. Heterodimer with UBE2V2. Interacts (UBE2V2-UBE2N heterodimer) with the E3 ligase STUB1 (via the U-box domain); the complex has a specific 'Lys-63'-linked polyubiquitination activity. Interacts with RNF8 and RNF168. Interacts with RNF11. Interacts with the E3 ligases, HLTF and SHPRH; the interactions promote the 'Lys-63'-linked polyubiquitination of PCNA upon genotoxic stress and lead to DNA repair. Interacts with ARIH2 (via RING-type 2). Interacts with OTUB1; leading to inhibit E2-conjugating activity. Interacts with RIGI and RNF135; involved in RIGI ubiquitination and activation. Conjugation to ISG15 impairs formation of the thioester bond with ubiquitin but not interaction with UBE2V2.

The catalysed reaction is S-ubiquitinyl-[E1 ubiquitin-activating enzyme]-L-cysteine + [E2 ubiquitin-conjugating enzyme]-L-cysteine = [E1 ubiquitin-activating enzyme]-L-cysteine + S-ubiquitinyl-[E2 ubiquitin-conjugating enzyme]-L-cysteine.. It participates in protein modification; protein ubiquitination. With respect to regulation, activity is inhibited by binding to OTUB1, which prevents 'Lys-63'-linked polyubiquitination. The UBE2V1-UBE2N and UBE2V2-UBE2N heterodimers catalyze the synthesis of non-canonical 'Lys-63'-linked polyubiquitin chains. This type of polyubiquitination does not lead to protein degradation by the proteasome. Mediates transcriptional activation of target genes. Plays a role in the control of progress through the cell cycle and differentiation. Plays a role in the error-free DNA repair pathway and contributes to the survival of cells after DNA damage. Acts together with the E3 ligases, HLTF and SHPRH, in the 'Lys-63'-linked poly-ubiquitination of PCNA upon genotoxic stress, which is required for DNA repair. Appears to act together with E3 ligase RNF5 in the 'Lys-63'-linked polyubiquitination of JKAMP thereby regulating JKAMP function by decreasing its association with components of the proteasome and ERAD. Promotes TRIM5 capsid-specific restriction activity and the UBE2V1-UBE2N heterodimer acts in concert with TRIM5 to generate 'Lys-63'-linked polyubiquitin chains which activate the MAP3K7/TAK1 complex which in turn results in the induction and expression of NF-kappa-B and MAPK-responsive inflammatory genes. Together with RNF135 and UB2V1, catalyzes the viral RNA-dependent 'Lys-63'-linked polyubiquitination of RIGI to activate the downstream signaling pathway that leads to interferon beta production. UBE2V1-UBE2N together with TRAF3IP2 E3 ubiquitin ligase mediate 'Lys-63'-linked polyubiquitination of TRAF6, a component of IL17A-mediated signaling pathway. In Macaca fascicularis (Crab-eating macaque), this protein is Ubiquitin-conjugating enzyme E2 N (UBE2N).